Consider the following 236-residue polypeptide: Phosphoribosylaminoimidazole-succinocarboxamide synthase (236 aa).

It belongs to the SAICAR synthetase family.

The enzyme catalyses 5-amino-1-(5-phospho-D-ribosyl)imidazole-4-carboxylate + L-aspartate + ATP = (2S)-2-[5-amino-1-(5-phospho-beta-D-ribosyl)imidazole-4-carboxamido]succinate + ADP + phosphate + 2 H(+). The protein operates within purine metabolism; IMP biosynthesis via de novo pathway; 5-amino-1-(5-phospho-D-ribosyl)imidazole-4-carboxamide from 5-amino-1-(5-phospho-D-ribosyl)imidazole-4-carboxylate: step 1/2. The protein is Phosphoribosylaminoimidazole-succinocarboxamide synthase of Pseudomonas aeruginosa (strain LESB58).